The sequence spans 465 residues: Ras GTPase-activating protein-binding protein 1 (465 aa).

Positions 11 to 133 (VGREFVRQYY…FYVHNDIFRY (123 aa)) constitute an NTF2 domain. Residues Lys-36, Lys-50, Lys-59, Lys-64, Lys-76, and Lys-123 each participate in a glycyl lysine isopeptide (Lys-Gly) (interchain with G-Cter in ubiquitin) cross-link. The interval 142 to 224 (ITEPQEESEE…EPVLEETAPE (83 aa)) is acidic disordered region. Phosphothreonine is present on Thr-143. 2 stretches are compositionally biased toward acidic residues: residues 145-157 (PQEE…EEPE) and 184-205 (EHLE…EQEP). The tract at residues 145 to 242 (PQEESEEEVE…APADIAQTVQ (98 aa)) is disordered. Ser-149 carries the phosphoserine modification. Residues Ser-230, Ser-231, Ser-249, and Ser-252 each carry the phosphoserine modification. A disordered region spans residues 254–326 (TSKNLPPSGA…PVREAGEQGD (73 aa)). Composition is skewed to basic and acidic residues over residues 296-306 (PQRDQRVREQR) and 317-326 (PVREAGEQGD). Residues 339–414 (HQLFIGNLPH…VRLNVEEKKT (76 aa)) form the RRM domain. Glycyl lysine isopeptide (Lys-Gly) (interchain with G-Cter in ubiquitin) cross-links involve residues Lys-352 and Lys-356. Position 372 is a phosphoserine (Ser-372). A Glycyl lysine isopeptide (Lys-Gly) (interchain with G-Cter in ubiquitin) cross-link involves residue Lys-375. Lys-375 is subject to N6-acetyllysine; alternate. Lys-375 is covalently cross-linked (Glycyl lysine isopeptide (Lys-Gly) (interchain with G-Cter in SUMO2); alternate). Residue Lys-392 forms a Glycyl lysine isopeptide (Lys-Gly) (interchain with G-Cter in ubiquitin); alternate linkage. The interval 409-465 (VEEKKTRAAREGDRRDNRLRGPGGPRGGLGGGMRGPPRGGMVQKPGFGVGRSIAPRQ) is RG-rich region. Over residues 412–427 (KKTRAAREGDRRDNRL) the composition is skewed to basic and acidic residues. The segment at 412 to 465 (KKTRAAREGDRRDNRLRGPGGPRGGLGGGMRGPPRGGMVQKPGFGVGRSIAPRQ) is disordered. At Arg-428 the chain carries Asymmetric dimethylarginine. A compositionally biased stretch (gly residues) spans 429-446 (GPGGPRGGLGGGMRGPPR). Arg-434 is subject to Asymmetric dimethylarginine; alternate. An omega-N-methylarginine; alternate mark is found at Arg-434, Arg-446, Arg-459, and Arg-464. Position 459 is a dimethylated arginine; alternate (Arg-459).

Homodimer and oligomer. Component of a TAU mRNP complex, at least composed of IGF2BP1, ELAVL4 and G3BP1. Binds to the SH3 domain of Ras GTPase-activating protein (RASA1) in proliferating cells. No interaction in quiescent cells. Interacts (via NTF2 domain) with USP10; inhibiting stress granule formation by lowering G3BP1 valence. Interacts (via NTF2 domain) with CAPRIN1; promoting stress granule formation by lowering the saturation-concentration of G3BP1. Interacts (via NTF2 domain) with UBAP2L; promoting stress granule formation. Associates (via RG-rich region) with 40S ribosome subunits. Interacts with RPTOR and SPAG5; this complex is increased by oxidative stress. Interacts with ATXN2L. Interacts with STYXL1. Interacts with CGAS (via N-terminus); this interaction promotes the DNA-binding and activation of CGAS. Interacts (via C-terminus) with RIGI. Interacts with PABPC1. Interacts with QKI (isoforms QKI6 and QKI7); directing N(7)-methylguanine-containing mRNAs to stress granules. It depends on Mg(2+) as a cofactor. In terms of processing, phosphorylation of the acidic disordered region regulates stress granule assembly. RASA1-dependent phosphorylation of Ser-149 induces a conformational change that prevents self-association. Dephosphorylation after HRAS activation is required for stress granule assembly. Ser-149 phosphorylation induces partial nuclear localization. Post-translationally, arg-435 is dimethylated, probably to asymmetric dimethylarginine. Ubiquitinated by TRIM21 via 'Lys-63'-linked polyubiquitination in the NTF2 domain in response to heat shock, leading to stress granule disassembly: ubiquitination promotes interaction with the FAF2 adapter, followed by interaction with VCP, which extracts G3BP1 from stress granules, leading to stress granule disassembly. In case of prolonged stress, ubiquitination by TRIM21 leads to autophagy-dependent degradation of G3BP1 via recruitment of ubiquitinated G3BP1 by SQSTM1 and/or CALCOCO2 to autophagosomes.

The protein localises to the cytoplasm. It is found in the cytosol. It localises to the perikaryon. The protein resides in the stress granule. Its subcellular location is the nucleus. It carries out the reaction ATP + H2O = ADP + phosphate + H(+). Its activity is regulated as follows. Under physiological conditions, G3BP1 adopts a compact state that is stabilized by intramolecular interactions between the RG-rich and the acidic regions that inhibit phase separation. Upon stress, polysomes disassemble and mRNAs are released in an unfolded protein-free state. Binding of unfolded mRNA to G3BP1 outcompetes the intramolecular interactions and RNA-bound G3BP1 adopts an expanded conformation in which the RG-rich region becomes exposed to engage in protein-protein and protein-RNA interactions, allowing physical cross-linking of RNA molecules to form protein-RNA condensates, leading to liquid-liquid phase separation (LLPS). In terms of biological role, protein involved in various processes, such as stress granule formation and innate immunity. Plays an essential role in stress granule formation. Stress granules are membraneless compartments that store mRNAs and proteins, such as stalled translation pre-initiation complexes, in response to stress. Promotes formation of stress granules phase-separated membraneless compartment by undergoing liquid-liquid phase separation (LLPS) upon unfolded RNA-binding: functions as a molecular switch that triggers RNA-dependent LLPS in response to a rise in intracellular free RNA concentrations. Also acts as an ATP- and magnesium-dependent helicase: unwinds DNA/DNA, RNA/DNA, and RNA/RNA substrates with comparable efficiency. Acts unidirectionally by moving in the 5' to 3' direction along the bound single-stranded DNA. Unwinds preferentially partial DNA and RNA duplexes having a 17 bp annealed portion and either a hanging 3' tail or hanging tails at both 5'- and 3'-ends. Plays an essential role in innate immunity by promoting CGAS and RIGI activity. Participates in the DNA-triggered cGAS/STING pathway by promoting the DNA binding and activation of CGAS. Triggers the condensation of cGAS, a process probably linked to the formation of membrane-less organelles. Also enhances RIGI-induced type I interferon production probably by helping RIGI at sensing pathogenic RNA. May also act as a phosphorylation-dependent sequence-specific endoribonuclease in vitro: Cleaves exclusively between cytosine and adenine and cleaves MYC mRNA preferentially at the 3'-UTR. The protein is Ras GTPase-activating protein-binding protein 1 (G3BP1) of Bos taurus (Bovine).